The sequence spans 426 residues: NADH-quinone oxidoreductase subunit D 1 (426 aa).

The interval 1–51 is disordered; the sequence is MATEFTVPDSAARIATAQQAGGGTPVRSGPPDEGGEFSGDRMSLSMGPSHP.

It belongs to the complex I 49 kDa subunit family. In terms of assembly, NDH-1 is composed of 14 different subunits. Subunits NuoB, C, D, E, F, and G constitute the peripheral sector of the complex.

The protein localises to the cell inner membrane. The enzyme catalyses a quinone + NADH + 5 H(+)(in) = a quinol + NAD(+) + 4 H(+)(out). Functionally, NDH-1 shuttles electrons from NADH, via FMN and iron-sulfur (Fe-S) centers, to quinones in the respiratory chain. The immediate electron acceptor for the enzyme in this species is believed to be ubiquinone. Couples the redox reaction to proton translocation (for every two electrons transferred, four hydrogen ions are translocated across the cytoplasmic membrane), and thus conserves the redox energy in a proton gradient. The protein is NADH-quinone oxidoreductase subunit D 1 of Opitutus terrae (strain DSM 11246 / JCM 15787 / PB90-1).